A 1549-amino-acid chain; its full sequence is Structural maintenance of chromosomes protein 4 (1549 aa).

The disordered stretch occupies residues 1 to 78; the sequence is MPPKTSAAPP…LFSLQLPSRP (78 aa). The segment covering 26 to 36 has biased composition (basic residues); sequence KPQKKTTKPVN. Positions 37–59 are enriched in basic and acidic residues; the sequence is RHKEGSKDPEEELQRAVNEKFDG. Position 121 to 128 (121 to 128) interacts with ATP; that stretch reads GPNGSGKS. Residues 326-604 adopt a coiled-coil conformation; sequence MKLEQRRRQR…QNSSCSSSNK (279 aa). 2 stretches are compositionally biased toward basic and acidic residues: residues 396 to 407 and 420 to 444; these read LSDLGTEETRRK and AEAE…AERK. Disordered stretches follow at residues 396 to 444 and 460 to 485; these read LSDL…AERK and KTAN…EEQK. Residues 619–734 enclose the SMC hinge domain; sequence KSFHGRLGDL…GDSTQEAQRM (116 aa). Coiled-coil stretches lie at residues 786–1058 and 1144–1182; these read KAAE…KVNR and EKIN…SIKA. Residues 1440 to 1459 show a composition bias toward polar residues; the sequence is IQTTRDVTSRPQSKATTSGD. Residues 1440 to 1549 are disordered; sequence IQTTRDVTSR…AIVDDDDDME (110 aa). A compositionally biased stretch (basic and acidic residues) spans 1460-1474; that stretch reads GTERPASRSASRPES. Residues 1510 to 1523 are compositionally biased toward polar residues; sequence TPPSKRSNSASTPK.

Belongs to the SMC family. SMC4 subfamily. Component of the condensin I complex, which contains the mix-1/SMC2 and smc-4/SMC4 heterodimer, and three non SMC subunits that probably regulate the complex: dpy-26, capg-1 and dpy-28. Within the complex, interacts with mix-1, dpy-26, capg-1 and dpy-28. Component of the condensin II complex, which contains the mix-1/SMC2 and smc-4/SMC4 heterodimer, and three non SMC subunits, kle-2, capg-2 and hcp-6 that probably regulate the complex. Within the complex, interacts with mix-1, kle-2, capg-2 and hcp-6. Interacts with smcl-1.

Its subcellular location is the nucleus. It is found in the chromosome. In terms of biological role, central component of the condensin I complex, a complex required for conversion of interphase chromatin into mitotic-like condense chromosomes. The condensin I complex introduces positive supercoils into relaxed DNA in the presence of type I topoisomerases. Converts nicked DNA into positive knotted forms in the presence of type II topoisomerases. Also a central component of the condensin II complex, a complex that seems to play a role in prophase chromosome condensation. Both the condensin complex I and II play a role in meiotic and mitotic chromosome segregation. Plays a role in robust cytokinesis upon the presence of chromatin obstructions. The protein is Structural maintenance of chromosomes protein 4 (smc-4) of Caenorhabditis elegans.